Reading from the N-terminus, the 300-residue chain is Junctional adhesion molecule A (300 aa).

The first 26 residues, 1–26, serve as a signal peptide directing secretion; sequence MGTEGKAGSKLLFLFTSMILGSLVQG. Residues 27–238 lie on the Extracellular side of the membrane; the sequence is KGSVYSPQTA…MEAVELNVGG (212 aa). Ig-like V-type domains follow at residues 28-122 and 134-228; these read GSVY…GEVS and PTVS…EAVR. 2 cysteine pairs are disulfide-bonded: Cys49-Cys108 and Cys152-Cys212. Asn185 carries an N-linked (GlcNAc...) asparagine glycan. A helical membrane pass occupies residues 239-259; that stretch reads IVAAVLVTLILLGLLIFGIWF. Topologically, residues 260 to 300 are cytoplasmic; the sequence is AYSRGYFERTKKGTAPGKKVIYSQPSARSEGEFKQTSSFLV. Residues Ser282, Ser285, and Ser288 each carry the phosphoserine modification.

Belongs to the immunoglobulin superfamily. Interacts with the ninth PDZ domain of MPDZ. Interacts with the first PDZ domain of PARD3. The association between PARD3 and PARD6B probably disrupts this interaction. Interacts with ITGAL (via I-domain). Interacts with CD151. In terms of processing, N-glycosylated.

It localises to the cell junction. Its subcellular location is the tight junction. It is found in the cell membrane. In terms of biological role, seems to play a role in epithelial tight junction formation. Appears early in primordial forms of cell junctions and recruits PARD3. The association of the PARD6-PARD3 complex may prevent the interaction of PARD3 with JAM1, thereby preventing tight junction assembly. Plays a role in regulating monocyte transmigration involved in integrity of epithelial barrier. Ligand for integrin alpha-L/beta-2 involved in memory T-cell and neutrophil transmigration. The chain is Junctional adhesion molecule A (F11r) from Rattus norvegicus (Rat).